Reading from the N-terminus, the 664-residue chain is Chaperone protein DnaK (664 aa).

Threonine 201 is subject to Phosphothreonine; by autocatalysis. Residues 574-592 (LKEDASTEKIKEASEELSR) show a composition bias toward basic and acidic residues. The segment at 574–664 (LKEDASTEKI…DVEIVDKPND (91 aa)) is disordered. Residues 600 to 617 (AMQSQSASAAPSSAANAQ) show a composition bias toward low complexity. The span at 639 to 649 (GNSTSASSNNE) shows a compositional bias: polar residues.

Belongs to the heat shock protein 70 family.

Its function is as follows. Acts as a chaperone. The polypeptide is Chaperone protein DnaK (Chlamydia felis (strain Fe/C-56) (Chlamydophila felis)).